The primary structure comprises 147 residues: MKFTKSLLLLIVAVFASSNAAETFSNFQVTNSDANSPCVTTPVELKVNTCQSACGSILNVLPVTGSTSKFTFNQFGAQDTKCAATPTSSNEFTCVDGKSKVAIGTTTYSVVCVPDKTNSSESDSSDSTRIGASFALAASVLLSMLAI.

An N-terminal signal peptide occupies residues 1 to 20 (MKFTKSLLLLIVAVFASSNA). The GPI-like-anchor amidated asparagine moiety is linked to residue asparagine 118. N-linked (GlcNAc...) asparagine glycosylation is present at asparagine 118. Residues 119 to 147 (SSESDSSDSTRIGASFALAASVLLSMLAI) constitute a propeptide, removed in mature form.

Belongs to the ponticulin family. The GPI-like-anchor contains a phosphoceramide group, rather than a phosphatidyl group.

It is found in the cell membrane. The chain is Ponticulin-like protein C1 (ponC1) from Dictyostelium discoideum (Social amoeba).